Reading from the N-terminus, the 238-residue chain is 1-(5-phosphoribosyl)-5-[(5-phosphoribosylamino)methylideneamino] imidazole-4-carboxamide isomerase (238 aa).

The Proton acceptor role is filled by aspartate 8. The Proton donor role is filled by aspartate 130.

Belongs to the HisA/HisF family.

The protein resides in the cytoplasm. The catalysed reaction is 1-(5-phospho-beta-D-ribosyl)-5-[(5-phospho-beta-D-ribosylamino)methylideneamino]imidazole-4-carboxamide = 5-[(5-phospho-1-deoxy-D-ribulos-1-ylimino)methylamino]-1-(5-phospho-beta-D-ribosyl)imidazole-4-carboxamide. Its pathway is amino-acid biosynthesis; L-histidine biosynthesis; L-histidine from 5-phospho-alpha-D-ribose 1-diphosphate: step 4/9. This Methanococcus maripaludis (strain C5 / ATCC BAA-1333) protein is 1-(5-phosphoribosyl)-5-[(5-phosphoribosylamino)methylideneamino] imidazole-4-carboxamide isomerase.